The sequence spans 154 residues: Protein X (154 aa).

A mitochondrial targeting sequence region spans residues 68–117 (PCALRFTSARRMETTVNAPQSLPTPLHKRTLGLSPRSTTWIEEYIKDCVF).

The protein belongs to the orthohepadnavirus protein X family. In terms of assembly, may form homodimer. May interact with host CEBPA, CFLAR, CREB1, DDB1, E4F1, HBXIP, HSPD1/HSP60, NFKBIA, POLR2E and SMAD4. Interacts with host SMC5-SMC6 complex and induces its degradation. Interacts with host TRPC4AP; leading to prevent ubiquitination of TRPC4AP. Interacts with host PLSCR1; this interaction promotes ubiquitination and degradation of HBx and impairs HBx-mediated cell proliferation. In terms of processing, a fraction may be phosphorylated in insect cells and HepG2 cells, a human hepatoblastoma cell line. Phosphorylated in vitro by host protein kinase C or mitogen-activated protein kinase. N-acetylated in insect cells.

The protein resides in the host cytoplasm. Its subcellular location is the host nucleus. It is found in the host mitochondrion. In terms of biological role, multifunctional protein that plays a role in silencing host antiviral defenses and promoting viral transcription. Does not seem to be essential for HBV infection. May be directly involved in development of cirrhosis and liver cancer (hepatocellular carcinoma). Most of cytosolic activities involve modulation of cytosolic calcium. The effect on apoptosis is controversial depending on the cell types in which the studies have been conducted. May induce apoptosis by localizing in mitochondria and causing loss of mitochondrial membrane potential. May also modulate apoptosis by binding host CFLAR, a key regulator of the death-inducing signaling complex (DISC). Promotes viral transcription by using the host E3 ubiquitin ligase DDB1 to target the SMC5-SMC6 complex to proteasomal degradation. This host complex would otherwise bind to viral episomal DNA, and prevents its transcription. Moderately stimulates transcription of many different viral and cellular transcription elements. Promoters and enhancers stimulated by HBx contain DNA binding sites for NF-kappa-B, AP-1, AP-2, c-EBP, ATF/CREB, or the calcium-activated factor NF-AT. In Homo sapiens (Human), this protein is Protein X.